The following is a 247-amino-acid chain: Flavin-dependent thymidylate synthase (247 aa).

The region spanning 1 to 237 is the ThyX domain; sequence MRVRLLEATE…PHTFEYYDAE (237 aa). Residues 85-88, 98-100, and Arg-176 contribute to the dUMP site; these read QLTR and SMR. Residue 88-90 coordinates FAD; it reads RHR. The short motif at 88-98 is the ThyX motif element; that stretch reads RHRHASFDVQS. FAD contacts are provided by residues 192 to 194 and His-198; that span reads NPR. DUMP is bound at residue Arg-203. Catalysis depends on Arg-203, which acts as the Involved in ionization of N3 of dUMP, leading to its activation.

The protein belongs to the thymidylate synthase ThyX family. In terms of assembly, homotetramer. FAD is required as a cofactor.

It carries out the reaction dUMP + (6R)-5,10-methylene-5,6,7,8-tetrahydrofolate + NADPH + H(+) = dTMP + (6S)-5,6,7,8-tetrahydrofolate + NADP(+). The protein operates within pyrimidine metabolism; dTTP biosynthesis. Catalyzes the reductive methylation of 2'-deoxyuridine-5'-monophosphate (dUMP) to 2'-deoxythymidine-5'-monophosphate (dTMP) while utilizing 5,10-methylenetetrahydrofolate (mTHF) as the methyl donor, and NADPH and FADH(2) as the reductant. This chain is Flavin-dependent thymidylate synthase, found in Halobacterium salinarum (strain ATCC 700922 / JCM 11081 / NRC-1) (Halobacterium halobium).